A 103-amino-acid polypeptide reads, in one-letter code: Small ribosomal subunit protein uS10 (103 aa).

Belongs to the universal ribosomal protein uS10 family. In terms of assembly, part of the 30S ribosomal subunit.

In terms of biological role, involved in the binding of tRNA to the ribosomes. This Shewanella pealeana (strain ATCC 700345 / ANG-SQ1) protein is Small ribosomal subunit protein uS10.